Here is a 1299-residue protein sequence, read N- to C-terminus: Cilia- and flagella-associated protein 251 (1299 aa).

The segment at 1–351 (MSDTEENPLE…SQKPEDILAQ (351 aa)) is disordered. Acidic residues-rich tracts occupy residues 17-45 (EMEE…EEEE), 91-162 (EKEE…EEDA), and 176-189 (ESQE…EWVE). Residues 190–199 (KEEQREGEEV) are compositionally biased toward basic and acidic residues. A compositionally biased stretch (acidic residues) spans 212-228 (EEEGWEEEKSGEEEKSE). Residues 229-257 (ESERSKERGGEEEGQEKEEAEHEGEREEG) show a composition bias toward basic and acidic residues. A compositionally biased stretch (acidic residues) spans 269-280 (REEEEEEEDTET). 2 stretches are compositionally biased toward basic and acidic residues: residues 281-297 (TETK…EKQN) and 331-351 (NSMK…ILAQ). WD repeat units follow at residues 484 to 526 (PVHT…IWKW), 534 to 574 (ACTL…CWFE), 585 to 624 (VLTE…VWDI), 643 to 678 (PRKL…FYDH), 681 to 741 (SVVN…VYHM), 745 to 785 (GTKL…VWDF), 791 to 828 (LFSR…ILDA), 838 to 874 (PFKY…MVVV), 881 to 924 (WEYL…EYNL), 935 to 975 (LDVH…LFNA), 981 to 1027 (RKTL…ILPV), 1033 to 1071 (KTCA…QWKI), 1109 to 1149 (YFYY…FYPS), and 1169 to 1209 (GKLI…GYTN).

It localises to the cytoplasm. The protein resides in the cytoskeleton. Its subcellular location is the cilium axoneme. The protein localises to the cell projection. It is found in the cilium. It localises to the flagellum. Functionally, involved in spermatozoa motility. May also regulate cilium motility through its role in the assembly of the axonemal radial spokes. This Mus musculus (Mouse) protein is Cilia- and flagella-associated protein 251.